The chain runs to 328 residues: N-acetyl-gamma-glutamyl-phosphate reductase (328 aa).

Residue cysteine 143 is part of the active site.

The protein belongs to the NAGSA dehydrogenase family. Type 1 subfamily.

The protein resides in the cytoplasm. The catalysed reaction is N-acetyl-L-glutamate 5-semialdehyde + phosphate + NADP(+) = N-acetyl-L-glutamyl 5-phosphate + NADPH + H(+). The protein operates within amino-acid biosynthesis; L-arginine biosynthesis; N(2)-acetyl-L-ornithine from L-glutamate: step 3/4. Catalyzes the NADPH-dependent reduction of N-acetyl-5-glutamyl phosphate to yield N-acetyl-L-glutamate 5-semialdehyde. The sequence is that of N-acetyl-gamma-glutamyl-phosphate reductase from Methanosphaerula palustris (strain ATCC BAA-1556 / DSM 19958 / E1-9c).